A 222-amino-acid polypeptide reads, in one-letter code: Adenylate kinase (222 aa).

Ser-2 is a propeptide (removed in mature form). N-acetylserine occurs at positions 2 and 3. 16–21 (GAGKGT) is an ATP binding site. The NMP stretch occupies residues 36–65 (ATGDMLRSQIAKGTQLGLEAKKIMDQGGLV). Residues Thr-37, Arg-42, 63–65 (GLV), 92–95 (GFPR), and Gln-99 contribute to the AMP site. Residues 133–170 (GRLIHPASGRSYHKIFNPPKEDMKDDVTGEALVQRSDD) are LID. Residues Arg-134 and 143–144 (SY) contribute to the ATP site. Positions 167 and 178 each coordinate AMP. Gln-206 is an ATP binding site.

The protein belongs to the adenylate kinase family. AK2 subfamily. Monomer.

The protein localises to the cytoplasm. It is found in the cytosol. Its subcellular location is the mitochondrion intermembrane space. It catalyses the reaction AMP + ATP = 2 ADP. Its function is as follows. Catalyzes the reversible transfer of the terminal phosphate group between ATP and AMP. Plays an important role in cellular energy homeostasis and in adenine nucleotide metabolism. Adenylate kinase activity is critical for regulation of the phosphate utilization and the AMP de novo biosynthesis pathways. This is Adenylate kinase from Saccharomyces cerevisiae (strain YJM789) (Baker's yeast).